Here is a 735-residue protein sequence, read N- to C-terminus: Photosystem I P700 chlorophyll a apoprotein A2 (735 aa).

Transmembrane regions (helical) follow at residues 46 to 69 (IFAS…FYVS), 135 to 158 (LSTA…IHGY), 176 to 200 (LNHH…HVAI), 274 to 292 (IAHH…GHMY), 329 to 352 (LNLQ…QHMY), 368 to 394 (AALY…IFLV), 416 to 438 (VIIS…LYVH), and 521 to 539 (FLVH…LILV). C563 and C572 together coordinate [4Fe-4S] cluster. 2 consecutive transmembrane segments (helical) span residues 579-600 (AFYL…YWHW) and 647-669 (LSVW…MFLI). The chlorophyll a site is built by H658, M666, and Y674. W675 contributes to the phylloquinone binding site. The helical transmembrane segment at 708-728 (FVGLIHFTVGYILTYAAFLIA) threads the bilayer.

It belongs to the PsaA/PsaB family. The PsaA/B heterodimer binds the P700 chlorophyll special pair and subsequent electron acceptors. PSI consists of a core antenna complex that captures photons, and an electron transfer chain that converts photonic excitation into a charge separation. The eukaryotic PSI reaction center is composed of at least 11 subunits. The cofactor is P700 is a chlorophyll a/chlorophyll a' dimer, A0 is one or more chlorophyll a, A1 is one or both phylloquinones and FX is a shared 4Fe-4S iron-sulfur center..

Its subcellular location is the plastid. It is found in the chloroplast thylakoid membrane. The enzyme catalyses reduced [plastocyanin] + hnu + oxidized [2Fe-2S]-[ferredoxin] = oxidized [plastocyanin] + reduced [2Fe-2S]-[ferredoxin]. In terms of biological role, psaA and PsaB bind P700, the primary electron donor of photosystem I (PSI), as well as the electron acceptors A0, A1 and FX. PSI is a plastocyanin/cytochrome c6-ferredoxin oxidoreductase, converting photonic excitation into a charge separation, which transfers an electron from the donor P700 chlorophyll pair to the spectroscopically characterized acceptors A0, A1, FX, FA and FB in turn. Oxidized P700 is reduced on the lumenal side of the thylakoid membrane by plastocyanin or cytochrome c6. The protein is Photosystem I P700 chlorophyll a apoprotein A2 of Bigelowiella natans (Pedinomonas minutissima).